A 189-amino-acid chain; its full sequence is Blue copper protein (189 aa).

A signal peptide spans 1–24; that stretch reads MAFSNALVLCFLLAIINMALPSLA. The 100-residue stretch at 25 to 124 folds into the Phytocyanin domain; it reads TVYTVGDTSG…GMKLSIKVKA (100 aa). Cu cation-binding residues include His65, Cys106, and His111. Cys78 and Cys106 form a disulfide bridge. Residues 127-160 show a composition bias toward low complexity; sequence GSSAAPSATPSSSGKGSPSSDDTPAATTTTTTPT. Positions 127 to 165 are disordered; it reads GSSAAPSATPSSSGKGSPSSDDTPAATTTTTTPTKQNES. N-linked (GlcNAc...) asparagine glycosylation is present at Asn163.

This is Blue copper protein from Pisum sativum (Garden pea).